Reading from the N-terminus, the 338-residue chain is Heat-inducible transcription repressor HrcA (338 aa).

It belongs to the HrcA family.

Its function is as follows. Negative regulator of class I heat shock genes (grpE-dnaK-dnaJ and groELS operons). Prevents heat-shock induction of these operons. The protein is Heat-inducible transcription repressor HrcA of Bacillus cereus (strain ATCC 10987 / NRS 248).